Consider the following 567-residue polypeptide: MSGCRAQNAPGGIPVTPKSSYSGPIVVDPVTRIEGHLRIEVEVENGKVKNAYSSSTLFRGLEIILKGRDPRDAQHFTQRTCGVCTYTHALASTRCVDNAVGVHIPKNATYIRNLVLGAQYLHDHIVHFYHLHALDFVDVTAALKADPAKAAKVASSISPRKTTAADLKAVQDKLKTFVESGQLGPFTNAYFLGGHPAYYLDPETNLIATAHYLEALRLQVKAARAMAVFGAKNPHTQFTVVGGVTCYDALTPQRIAEFEALWKETKAFVDEVYIPDLLVVAAAYKDWTQYGGTDNFITFGEFPKDEYDLNSRFFKPGVVFKRDFKNIKPFDKMQIEEHVRHSWYEGAEARHPWKGQTQPKYTDLHGDDRYSWMKAPRYMGEPMETGPLAQVLIAYSQGHPKVKAVTDAVLAKLGVGPEALFSTLGRTAARGIETAVIAEYVGVMLQEYKDNIAKGDNVICAPWEMPKQAEGVGFVNAPRGGLSHWIRIEDGKIGNFQLVVPSTWTLGPRCDKNKLSPVEASLIGTPVADAKRPVEILRTVHSFDPCIACGVHVIDGHTNEVHKFRIL.

Position 62 (E62) interacts with Mg(2+). Positions 81 and 84 each coordinate Ni(2+). A Fe cation-binding site is contributed by C84. A Mg(2+)-binding site is contributed by L498. 2 residues coordinate Ni(2+): C546 and C549. Fe cation is bound at residue C549. H552 serves as a coordination point for Mg(2+). The propeptide occupies 553–567; that stretch reads VIDGHTNEVHKFRIL.

Belongs to the [NiFe]/[NiFeSe] hydrogenase large subunit family. Heterodimer of a large and a small subunit. Ni(2+) is required as a cofactor. It depends on Fe cation as a cofactor.

It localises to the periplasm. The enzyme catalyses 2 Fe(III)-[cytochrome c3] + H2 = 2 Fe(II)-[cytochrome c3] + 2 H(+). Its function is as follows. Catalyzes the reversible oxidoreduction of molecular hydrogen, in conjunction with a specific electron acceptor, cytochrome c3. This Nitratidesulfovibrio vulgaris (strain DSM 19637 / Miyazaki F) (Desulfovibrio vulgaris) protein is Periplasmic [NiFe] hydrogenase large subunit (hydB).